The following is a 384-amino-acid chain: Zinc finger protein GLIS2 homolog (384 aa).

The C2H2-type 1 zinc finger occupies phenylalanine 128–histidine 153. Residues tyrosine 163 to histidine 190 form a C2H2-type 2; degenerate zinc finger. C2H2-type zinc fingers lie at residues histidine 196–histidine 218, tyrosine 224–histidine 248, and tyrosine 254–histidine 280. Residues serine 321 to lysine 343 are disordered.

Belongs to the GLI C2H2-type zinc-finger protein family.

The protein localises to the nucleus. In terms of biological role, transcription factor which represses a set of lipase genes involved in fat catabolism. This is Zinc finger protein GLIS2 homolog (sug) from Drosophila melanogaster (Fruit fly).